Reading from the N-terminus, the 711-residue chain is Polyribonucleotide nucleotidyltransferase (711 aa).

Residues aspartate 490 and aspartate 496 each coordinate Mg(2+). In terms of domain architecture, KH spans 557–616; that stretch reads PRIETMQIPTDKIREVIGSGGKVIREIVETSGAKVDINDDGIIKIASANGEAIKKAYEMI. Residues 626-694 form the S1 motif domain; it reads GKVYTGTVVK…DRGKVRLSMK (69 aa).

Belongs to the polyribonucleotide nucleotidyltransferase family. Mg(2+) serves as cofactor.

The protein resides in the cytoplasm. The catalysed reaction is RNA(n+1) + phosphate = RNA(n) + a ribonucleoside 5'-diphosphate. In terms of biological role, involved in mRNA degradation. Catalyzes the phosphorolysis of single-stranded polyribonucleotides processively in the 3'- to 5'-direction. The sequence is that of Polyribonucleotide nucleotidyltransferase from Dinoroseobacter shibae (strain DSM 16493 / NCIMB 14021 / DFL 12).